The following is a 103-amino-acid chain: A-type ATP synthase subunit F (103 aa).

The protein belongs to the V-ATPase F subunit family. As to quaternary structure, has multiple subunits with at least A(3), B(3), C, D, E, F, H, I and proteolipid K(x).

Its subcellular location is the cell membrane. In terms of biological role, component of the A-type ATP synthase that produces ATP from ADP in the presence of a proton gradient across the membrane. The sequence is that of A-type ATP synthase subunit F from Pyrococcus furiosus (strain ATCC 43587 / DSM 3638 / JCM 8422 / Vc1).